The chain runs to 700 residues: AP-1-like transcription factor yap1 (700 aa).

2 disordered regions span residues 17–185 (SPGH…KDLE) and 228–296 (MPVN…VSLR). The Bipartite nuclear localization signal motif lies at 34–41 (MPVPGRDT). Residues 47–59 (PSVSNGSQPSAHQ) are compositionally biased toward polar residues. The Bipartite nuclear localization signal signature appears at 67 to 74 (SPTPEMPP). Residues 103–112 (LDDDDDDASD) show a composition bias toward acidic residues. The span at 127 to 138 (AGRAAAASASGS) shows a compositional bias: low complexity. Positions 150-185 (GDGKRELSKSERRKEQNRAAQKAFRERREAKVKDLE) are enriched in basic and acidic residues. In terms of domain architecture, bZIP spans 156–219 (LSKSERRKEQ…KRLQEENVAL (64 aa)). The basic motif stretch occupies residues 158 to 182 (KSERRKEQNRAAQKAFRERREAKVK). Residues 184–191 (LEDKVAEL) form a leucine-zipper region. Transcription activation regions lie at residues 213-400 (QEEN…QPDS) and 452-577 (LGAT…GRGN). Positions 231 to 244 (NSRNSPNSNNGSFS) are enriched in low complexity. A compositionally biased stretch (polar residues) spans 280–296 (SANTISDNSSESLVSLR). The interval 306–318 (FSDHFNTYALGVV) is n-CRD. Disordered regions lie at residues 320–359 (VPPP…PSAD) and 542–609 (NYLN…KATT). Composition is skewed to low complexity over residues 335-358 (SASN…PPSA) and 542-573 (NYLN…NVSS). Residues 589-607 (MGSSRTSVSHDSTDLQGKA) are compositionally biased toward polar residues. The tract at residues 642–675 (PSELWMRFGMQHENSTEHLLIDDLCDQMRAKATC) is c-CRD. Positions 660-667 (LLIDDLCD) match the Nuclear export signal motif. Cys-666 and Cys-675 are oxidised to a cystine.

This sequence belongs to the bZIP family. YAP subfamily. In terms of processing, depending on the oxidative stress inducing agent, yap1 can undergo two distinct conformational changes, both involving disulfide bond formation, and both masking the nuclear export signal, thus abolishing nuclear export.

Its subcellular location is the nucleus. The protein resides in the cytoplasm. Its function is as follows. Transcription activator involved in oxidative stress response and redox homeostasis. Regulates the transcription of genes encoding antioxidant enzymes and components of the cellular thiol-reducing pathways. Involved in antifungal resistance to fluconazole. This chain is AP-1-like transcription factor yap1, found in Cryptococcus neoformans var. grubii serotype A (strain H99 / ATCC 208821 / CBS 10515 / FGSC 9487) (Filobasidiella neoformans var. grubii).